The following is a 187-amino-acid chain: Pyridoxal 5'-phosphate synthase subunit PdxT (187 aa).

47-49 (GES) is a binding site for L-glutamine. Cysteine 76 serves as the catalytic Nucleophile. L-glutamine-binding positions include arginine 102 and 128 to 129 (IR). Residues histidine 165 and glutamate 167 each act as charge relay system in the active site.

The protein belongs to the glutaminase PdxT/SNO family. In terms of assembly, in the presence of PdxS, forms a dodecamer of heterodimers. Only shows activity in the heterodimer.

It catalyses the reaction aldehydo-D-ribose 5-phosphate + D-glyceraldehyde 3-phosphate + L-glutamine = pyridoxal 5'-phosphate + L-glutamate + phosphate + 3 H2O + H(+). It carries out the reaction L-glutamine + H2O = L-glutamate + NH4(+). It participates in cofactor biosynthesis; pyridoxal 5'-phosphate biosynthesis. Functionally, catalyzes the hydrolysis of glutamine to glutamate and ammonia as part of the biosynthesis of pyridoxal 5'-phosphate. The resulting ammonia molecule is channeled to the active site of PdxS. This Methanococcus maripaludis (strain C7 / ATCC BAA-1331) protein is Pyridoxal 5'-phosphate synthase subunit PdxT.